The chain runs to 306 residues: D-alanine--D-alanine ligase B (306 aa).

Catalysis depends on residues Glu-15 and Ser-150. Residues 101-303 (KLLWQGAGLP…FSQLVVRILE (203 aa)) form the ATP-grasp domain. 134–189 (ISALGLPVIVKPSREGSSVGMSKVVAENALQDALRLAFQHDEEVLIEKWLSGPEFT) serves as a coordination point for ATP. Residues Asp-257, Glu-270, and Asn-272 each coordinate Mg(2+). Ser-281 is a catalytic residue.

This sequence belongs to the D-alanine--D-alanine ligase family. In terms of assembly, monomer. The cofactor is Mg(2+). Mn(2+) is required as a cofactor.

The protein localises to the cytoplasm. It catalyses the reaction 2 D-alanine + ATP = D-alanyl-D-alanine + ADP + phosphate + H(+). It functions in the pathway cell wall biogenesis; peptidoglycan biosynthesis. In terms of biological role, cell wall formation. The polypeptide is D-alanine--D-alanine ligase B (ddlB) (Escherichia coli O157:H7).